We begin with the raw amino-acid sequence, 536 residues long: Membrane protein insertase YidC (536 aa).

The next 5 helical transmembrane spans lie at 3 to 23 (LQRNFFILIFFFISFLLWKTW), 346 to 366 (ICGNWGVSIILITFIIKGITF), 417 to 437 (GGCFPLFIQMPIFLALYYMLI), 454 to 474 (LSDQDPFYVLPILMGVTMFFI), and 494 to 514 (IPILFTVFFLWFPSGLVLYYL).

Belongs to the OXA1/ALB3/YidC family. Type 1 subfamily. Interacts with the Sec translocase complex via SecD. Specifically interacts with transmembrane segments of nascent integral membrane proteins during membrane integration.

The protein localises to the cell membrane. Required for the insertion and/or proper folding and/or complex formation of integral membrane proteins into the membrane. Involved in integration of membrane proteins that insert both dependently and independently of the Sec translocase complex, as well as at least some lipoproteins. Aids folding of multispanning membrane proteins. The chain is Membrane protein insertase YidC from Buchnera aphidicola subsp. Baizongia pistaciae (strain Bp).